Reading from the N-terminus, the 345-residue chain is Tetraacyldisaccharide 4'-kinase (345 aa).

54–61 (TLGGAGKT) lines the ATP pocket.

Belongs to the LpxK family.

It carries out the reaction a lipid A disaccharide + ATP = a lipid IVA + ADP + H(+). Its pathway is glycolipid biosynthesis; lipid IV(A) biosynthesis; lipid IV(A) from (3R)-3-hydroxytetradecanoyl-[acyl-carrier-protein] and UDP-N-acetyl-alpha-D-glucosamine: step 6/6. Transfers the gamma-phosphate of ATP to the 4'-position of a tetraacyldisaccharide 1-phosphate intermediate (termed DS-1-P) to form tetraacyldisaccharide 1,4'-bis-phosphate (lipid IVA). This is Tetraacyldisaccharide 4'-kinase from Allorhizobium ampelinum (strain ATCC BAA-846 / DSM 112012 / S4) (Agrobacterium vitis (strain S4)).